Reading from the N-terminus, the 1163-residue chain is MATLAYSIEVEGLEDETLVVRGFHGQESLSNSVFLGQACYGFRYEVQLASRVSNLTAEQMVDKRAELKLYRNSQLVQRVHGIVRAFSQGDIGHHHTFYQLTLVPALERLSLRHNSRIFQKQTVPEILSILLQEMGINDYAFALKRDGVQREFCVQYRESDIDFLHRLAAEEGLVYSFVHEAGKHTLYFSDASDSLSKLPEPIPYNALVGGAIDTPYIHGLTYRTQAEVSEVQLKDYSFKKPAYSFLQTVQGTELDYQQTRYQHFDAPGRYKDDVNGAAFSQIRLDYLRRHAHTATGQSNEPLLRAGYKFDLQEHLDPAMNRDWVVVSINHQGEQPQALQEDGGSGATTYSNQFSLIPGHLHWRAEPQPKPQVDGPMIATVVGPEGEEIFCDEHGRVKIHFPWDRYSNGNEQSSCWVRVSQGWAGSQYGFIAIPRIGHEVIVEFLNGDPDQPIITGRTYHATNTPPYTLPEHKTKTVLRTETHQGEGFNELSFEDQAGKEQIYLHAQKDFDGLIENDHTTVIRHDHHLTVENDQFTQIKHNQHLTVEWESREAVTGEQVLSIEGSLHVKTGKVWVNEAGTEIHVKAGQKVVIEAGSEITVKAGGSFVKVDPAGVHLSGALVNLNSGGSAGSGSGFGGAMPALPGGLEPAVALAPPQTISYQALLQAEQANVPAVKVCPLAAQEATPAVNSITPPPPPPIAPPMAPPQPIMNPQPTANAQPNLGRSTKATPDFPTHFPKSSIGIENELAGLVVAMPANSAQKFGYVKSAQGDALFMLTKDMNQGSYQRPPSLQDGKNYQNWQTHTVELVSYPCEMDDKAAVETRKQAMLWLATHFTTHIDQSNHQPLAPIQSEDGRFVIEITNAKHVIAAGNGISAESQGQTITMTPSGQQATVGVAAKGFGTSATPELRLLESAPWYQKSLKSQFASLTSAENLDDKELAANVFAYLTSIYLKTAELAKKFGIYINEWDPMSEQITPNANGLTDPKVKNAWEILPRTKPSKIVEILSKSDAKAVMKHIKPQLQSRYSESLSKNVFQYFQDGGEVAGHGINNATVGDKHSPELAILFEFRTVPNELQSYLPKTESTTKSEVKLLDQFDPMKRKTVIQQVESLVQNSGDAFDKWYQSYRDSMNQPPVKNAKKIASANQKAQWVKEHNPQEWQRIIA.

The ACD domain occupies 728 to 1163 (TPDFPTHFPK…NPQEWQRIIA (436 aa)). 739–743 (SIGIE) serves as a coordination point for ATP. Positions 743 and 805 each coordinate Mg(2+). Ser808 is a binding site for ATP. Gln889 is a binding site for Mg(2+). Residue Arg995 participates in ATP binding. Glu1066 contributes to the Mg(2+) binding site.

Belongs to the VgrG protein family. Interacts with protein VC1417. It depends on Mg(2+) as a cofactor.

It localises to the secreted. The protein resides in the host cytoplasm. The protein localises to the host cytosol. Part of the type VI secretion system (T6SS) specialized secretion system, which delivers several virulence factors in both prokaryotic and eukaryotic cells during infection. Forms the spike at the tip of the elongating tube probably formed by hemolysin co-regulated protein/Hcp. Allows the delivery of the TseL antibacterial toxin to target cells where it exerts its toxicity. Also acts directly as an actin-directed toxin that catalyzes the covalent cross-linking of host cytoplasmic monomeric actin. Mediates the cross-link between 'Lys-50' of one monomer and 'Glu-270' of another actin monomer, resulting in formation of highly toxic actin oligomers that cause cell rounding. The toxin can be highly efficient at very low concentrations by acting on formin homology family proteins: toxic actin oligomers bind with high affinity to formins and adversely affect both nucleation and elongation abilities of formins, causing their potent inhibition in both profilin-dependent and independent manners. Acts as an acid--amino-acid ligase that transfers the gamma-phosphoryl group of ATP to the 'Glu-270' actin residue, resulting in the formation of an activated acyl phosphate intermediate. This intermediate is further hydrolyzed and the energy of hydrolysis is utilized for the formation of the amide bond between actin subunits. The sequence is that of Actin cross-linking toxin VgrG1 from Vibrio cholerae serotype O1 (strain ATCC 39315 / El Tor Inaba N16961).